The chain runs to 106 residues: Apovitellenin-1 (106 aa).

The signal sequence occupies residues 1–24 (MVQYRALVIAVILLLSTTVPEVHS).

It belongs to the apovitellenin family. In terms of assembly, homodimer; disulfide-linked. In terms of tissue distribution, produced by the liver, secreted into the blood and then sequestred by receptor mediated endocytosis into growing oocytes.

Functionally, protein component of the very low density lipoprotein (VLDL) of egg-laying females. Potent lipoprotein lipase inhibitor, preventing the loss of triglycerides from VLDL on their way from the liver to the growing oocytes. This Gallus gallus (Chicken) protein is Apovitellenin-1.